We begin with the raw amino-acid sequence, 332 residues long: Putative ankyrin repeat protein R896 (332 aa).

ANK repeat units follow at residues 159 to 188 (GNDN…NVKS), 190 to 218 (DNCA…NVKA), 219 to 248 (DGNY…DIKA), 249 to 278 (AQNL…NIST), and 280 to 308 (NDYV…DIFS).

In Acanthamoeba polyphaga mimivirus (APMV), this protein is Putative ankyrin repeat protein R896.